Reading from the N-terminus, the 347-residue chain is Nod factor export ATP-binding protein I (347 aa).

Basic and acidic residues predominate over residues 1–11 (MGENMEREMLR). The segment at 1 to 32 (MGENMEREMLRPKTIAMDQNSASARSNPEREI) is disordered. Polar residues predominate over residues 17–26 (MDQNSASARS). The ABC transporter domain maps to 49–279 (IDLQAVTMIY…IIGCPVIEVY (231 aa)). 81-88 (GPNGAGKS) provides a ligand contact to ATP.

This sequence belongs to the ABC transporter superfamily. Lipooligosaccharide exporter (TC 3.A.1.102) family. The complex is composed of two ATP-binding proteins (NodI) and two transmembrane proteins (NodJ).

It localises to the cell inner membrane. Part of the ABC transporter complex NodIJ involved in the export of the nodulation factors (Nod factors), the bacterial signal molecules that induce symbiosis and subsequent nodulation induction. Nod factors are LCO (lipo-chitin oligosaccharide), a modified beta-1,4-linked N-acetylglucosamine oligosaccharide. This subunit is responsible for energy coupling to the transport system. The polypeptide is Nod factor export ATP-binding protein I (Neorhizobium galegae (Rhizobium galegae)).